The sequence spans 218 residues: Thiamine-phosphate synthase (218 aa).

4-amino-2-methyl-5-(diphosphooxymethyl)pyrimidine is bound by residues 43–47 (QFRDK) and Asn78. Mg(2+)-binding residues include Asp79 and Asp98. Ser117 is a binding site for 4-amino-2-methyl-5-(diphosphooxymethyl)pyrimidine. 143–145 (TNS) serves as a coordination point for 2-[(2R,5Z)-2-carboxy-4-methylthiazol-5(2H)-ylidene]ethyl phosphate. Lys146 is a binding site for 4-amino-2-methyl-5-(diphosphooxymethyl)pyrimidine. Residues Gly174 and 194-195 (IS) each bind 2-[(2R,5Z)-2-carboxy-4-methylthiazol-5(2H)-ylidene]ethyl phosphate.

It belongs to the thiamine-phosphate synthase family. The cofactor is Mg(2+).

It carries out the reaction 2-[(2R,5Z)-2-carboxy-4-methylthiazol-5(2H)-ylidene]ethyl phosphate + 4-amino-2-methyl-5-(diphosphooxymethyl)pyrimidine + 2 H(+) = thiamine phosphate + CO2 + diphosphate. It catalyses the reaction 2-(2-carboxy-4-methylthiazol-5-yl)ethyl phosphate + 4-amino-2-methyl-5-(diphosphooxymethyl)pyrimidine + 2 H(+) = thiamine phosphate + CO2 + diphosphate. The enzyme catalyses 4-methyl-5-(2-phosphooxyethyl)-thiazole + 4-amino-2-methyl-5-(diphosphooxymethyl)pyrimidine + H(+) = thiamine phosphate + diphosphate. The protein operates within cofactor biosynthesis; thiamine diphosphate biosynthesis; thiamine phosphate from 4-amino-2-methyl-5-diphosphomethylpyrimidine and 4-methyl-5-(2-phosphoethyl)-thiazole: step 1/1. Functionally, condenses 4-methyl-5-(beta-hydroxyethyl)thiazole monophosphate (THZ-P) and 2-methyl-4-amino-5-hydroxymethyl pyrimidine pyrophosphate (HMP-PP) to form thiamine monophosphate (TMP). The protein is Thiamine-phosphate synthase of Lactococcus lactis subsp. cremoris (strain MG1363).